We begin with the raw amino-acid sequence, 96 residues long: Essential MCU regulator, mitochondrial (96 aa).

The N-terminal 34 residues, 1 to 34 (MIVSRLTFPLQAAKLVARKAAGNPSNSIIQRRHM), are a transit peptide targeting the mitochondrion. A helical transmembrane segment spans residues 52 to 72 (PFGLFAIFCAVIPGLFIGATI).

This sequence belongs to the SMDT1/EMRE family.

The protein localises to the mitochondrion inner membrane. Its function is as follows. Essential regulatory subunit of the mitochondrial calcium uniporter (mcu) channel, a protein that mediates calcium uptake into mitochondria. This is Essential MCU regulator, mitochondrial from Drosophila pseudoobscura pseudoobscura (Fruit fly).